Consider the following 262-residue polypeptide: Putative hydro-lyase Sca_2211 (262 aa).

This sequence belongs to the D-glutamate cyclase family.

The protein is Putative hydro-lyase Sca_2211 of Staphylococcus carnosus (strain TM300).